The following is a 154-amino-acid chain: NADPH-dependent 7-cyano-7-deazaguanine reductase (154 aa).

The active-site Thioimide intermediate is the C52. The Proton donor role is filled by D59. Substrate is bound by residues 74–76 and 93–94; these read VES and HE.

Belongs to the GTP cyclohydrolase I family. QueF type 1 subfamily.

It is found in the cytoplasm. It carries out the reaction 7-aminomethyl-7-carbaguanine + 2 NADP(+) = 7-cyano-7-deazaguanine + 2 NADPH + 3 H(+). The protein operates within tRNA modification; tRNA-queuosine biosynthesis. Its function is as follows. Catalyzes the NADPH-dependent reduction of 7-cyano-7-deazaguanine (preQ0) to 7-aminomethyl-7-deazaguanine (preQ1). The protein is NADPH-dependent 7-cyano-7-deazaguanine reductase of Ruegeria sp. (strain TM1040) (Silicibacter sp.).